Consider the following 1667-residue polypeptide: Androglobin (1667 aa).

Residues 1-11 (MASKQTKKKEV) show a composition bias toward basic residues. 3 disordered regions span residues 1–45 (MASK…KGKF), 347–387 (SLTT…KFSL), and 540–566 (GSDL…ITKA). In terms of domain architecture, Calpain catalytic spans 70 to 411 (KDKTGKSPVF…SLSDCSSAIQ (342 aa)). The span at 353 to 384 (APEKSDKVPKEKADARDIGKKRSKDGEKEKFK) shows a compositional bias: basic and acidic residues. Polar residues predominate over residues 554–566 (THSQTDLSQITKA). The 128-residue stretch at 763–890 (HICSMVSFVI…EEVSLVEWLD (128 aa)) folds into the Globin; C-terminal part domain. Positions 792 and 824 each coordinate heme b. The IQ domain maps to 906–935 (EVAAAIKIQAMWRGTYVRLLMKARIPDTKE). The 33-residue stretch at 936–968 (NISVADTLQKVWAVLEMNLEQYAVSLLRLMFKS) folds into the Globin; N-terminal part domain. 2 disordered regions span residues 1297 to 1355 (INLG…QQED) and 1420 to 1522 (TSDA…RSPT). Over residues 1301–1315 (SPDSHTISEGQKSSV) the composition is skewed to polar residues. 2 stretches are compositionally biased toward basic and acidic residues: residues 1325–1340 (EKSS…KQAP) and 1433–1450 (TKPK…KEPN). Polar residues predominate over residues 1451-1468 (SKNSAGSESKEMTQTGSG). The span at 1487–1498 (STSSESGGVSSP) shows a compositional bias: low complexity. Basic and acidic residues predominate over residues 1499–1511 (GKEEREQSTRKEN). The segment covering 1512–1522 (IQTGPRTRSPT) has biased composition (polar residues). The stretch at 1588-1629 (QEERLKLKDEVLDMYKEMQDSLDEARQKIFDIREEYRNKLLE) forms a coiled coil. Positions 1646–1667 (KLETEKMTPAPDTQKKKKGKKK) are disordered.

It in the central section; belongs to the globin family. In the N-terminal section; belongs to the peptidase C2 family. Interacts with septin SEPT10; contributes to in vitro proteolytic cleavage of SEPT10 in a calmodulin-dependent manner. Interacts with CFAP69. Interacts with SPEF2. May interact with calmodulin.

It is found in the cell projection. The protein localises to the cilium. The protein resides in the flagellum. Functionally, probable chimeric globin with a bis-histidyl six-coordinate heme-iron atom through which it could bind dioxygen, carbon monoxide and nitric oxide. Required for sperm flagellum formation and maturation of elongating spermatids, thus playing an essential role in male fertility. The protein is Androglobin of Homo sapiens (Human).